The primary structure comprises 202 residues: Imidazoleglycerol-phosphate dehydratase (202 aa).

It belongs to the imidazoleglycerol-phosphate dehydratase family.

The protein resides in the cytoplasm. It carries out the reaction D-erythro-1-(imidazol-4-yl)glycerol 3-phosphate = 3-(imidazol-4-yl)-2-oxopropyl phosphate + H2O. Its pathway is amino-acid biosynthesis; L-histidine biosynthesis; L-histidine from 5-phospho-alpha-D-ribose 1-diphosphate: step 6/9. In Corynebacterium efficiens (strain DSM 44549 / YS-314 / AJ 12310 / JCM 11189 / NBRC 100395), this protein is Imidazoleglycerol-phosphate dehydratase.